We begin with the raw amino-acid sequence, 656 residues long: MFFHAILVLIQVALALGASPRAGSSERSKYFVTSLPGMYSNLPKEEIPIMFSGQLELFPENNTHYYFWKFVNPNPIAEAERRTIFWLNGGPGCSSMDGALMEAGPFRVNDDKEIVYNNGSWHKAGDIVFVDQPAGTGFSYSDEYEHELPDVSVHFLKFLEKYFEVFPEDRQNQIFFAGESYAGQYIPYIADGILKRNKNLKAGESPYDLRGLLIGNGWIAPNEQSLSYVQYALQAGFVSPSMPGWSRLLASQERCQNVVNSVNTQDDSVSDYKVVSDVCDQVLNTLLEVARDRDAPADQQCVNMYDYTLRDEFPSCGMNWPPDLVNVKPFLNIPGVQSQLNLVHKKPWLECSGRVGRNFVAQRSKPAVHLLPSLLEDVPILLFNGNRDIICNYIGTEAFIKELEWNGQKGWDDDNVFDWNFDGNLAGYVRNSRNLTFVNVFNSSHMVPFDLPDTSRSLMDLVTGNFDIKDDKILTYKLGTRGQAKQSDKKPASTSSIPSEISATALASGSSSASAQASATANEADGDNNTSHKIERAIQLLVIIVLLWGIYALYSSYKSRPSSIIKSGPTGKKKNVQWADQLRRFQEDDQVRVQPHGIFAKALNKFKGNSDGAYAPVQGRYEDIEMSSASPIDDFVVVSDDEEEEPSRNEPSSNQK.

Residues 1–17 (MFFHAILVLIQVALALG) form the signal peptide. At 18 to 536 (ASPRAGSSER…DNNTSHKIER (519 aa)) the chain is on the lumenal side. N-linked (GlcNAc...) asparagine glycosylation is found at asparagine 61 and asparagine 118. Residues serine 180 and aspartate 388 contribute to the active site. N-linked (GlcNAc...) asparagine glycosylation is found at asparagine 434 and asparagine 442. Histidine 445 is an active-site residue. Residues 537 to 557 (AIQLLVIIVLLWGIYALYSSY) traverse the membrane as a helical segment. Residues 558 to 656 (KSRPSSIIKS…SRNEPSSNQK (99 aa)) are Cytoplasmic-facing. The disordered stretch occupies residues 626–656 (MSSASPIDDFVVVSDDEEEEPSRNEPSSNQK).

Belongs to the peptidase S10 family.

Its subcellular location is the golgi apparatus. It is found in the trans-Golgi network membrane. The enzyme catalyses Preferential release of a C-terminal arginine or lysine residue.. Its function is as follows. Protease with a carboxypeptidase B-like function involved in the C-terminal processing of the lysine and arginine residues from protein precursors. Promotes cell fusion and is involved in the programmed cell death. The protein is Pheromone-processing carboxypeptidase KEX1 (KEX1) of Meyerozyma guilliermondii (strain ATCC 6260 / CBS 566 / DSM 6381 / JCM 1539 / NBRC 10279 / NRRL Y-324) (Yeast).